The sequence spans 154 residues: Bacterial ferritin (154 aa).

The 145-residue stretch at 1–145 (MQGNQAVVDY…QQLRLIELIG (145 aa)) folds into the Ferritin-like diiron domain. 6 residues coordinate Fe cation: E18, E51, H54, E93, E127, and H130.

This sequence belongs to the bacterioferritin family. In terms of assembly, forms a bacterioferritin (BFR) complex with BfrB. Heterooligomer of 24 subunits, arranged as 12 dimers, that are packed together to form an approximately spherical molecule with a central cavity, in which large amounts of iron can be deposited.

Its subcellular location is the cytoplasm. The enzyme catalyses 4 Fe(2+) + O2 + 4 H(+) = 4 Fe(3+) + 2 H2O. It carries out the reaction Fe(2+)(in) = Fe(2+)(out). In terms of biological role, iron-storage protein. Its ferroxidase center binds Fe(2+), oxidizes it using dioxygen to Fe(3+), and participates in the subsequent Fe(3+) oxide mineral core formation within the central cavity of the BFR protein shell. Plays a role in protection against iron-mediated oxidative stress. The chain is Bacterial ferritin from Neisseria gonorrhoeae.